We begin with the raw amino-acid sequence, 351 residues long: 1-acylglycerol-3-phosphate O-acyltransferase ABHD5 (351 aa).

An AB hydrolase-1 domain is found at 79-184 (PLVLLHGFGG…LILVEPWGFP (106 aa)). At Ser124 the chain carries Phosphoserine. The HXXXXD motif signature appears at 329–334 (HYVYAD).

It belongs to the peptidase S33 family. ABHD4/ABHD5 subfamily. Interacts with ADRP. Interacts with PLIN. Interacts with and PNPLA2. Interacts with PLIN5; promotes interaction with PNPLA2. As to expression, highly expressed in the adipose tissue and testes. Weakly expressed in the liver, muscle, kidney, and heart. Expressed by upper epidermal layers and dermal fibroblasts in skin, hepatocytes and hypothalamus in brain (at protein level).

Its subcellular location is the cytoplasm. The protein localises to the lipid droplet. It is found in the cytosol. The enzyme catalyses a 1-acyl-sn-glycero-3-phosphate + an acyl-CoA = a 1,2-diacyl-sn-glycero-3-phosphate + CoA. It catalyses the reaction 1-(9Z-octadecenoyl)-sn-glycero-3-phosphate + (9Z)-octadecenoyl-CoA = 1,2-di-(9Z-octadecenoyl)-sn-glycero-3-phosphate + CoA. The catalysed reaction is 1-(9Z-octadecenoyl)-sn-glycero-3-phosphate + hexadecanoyl-CoA = 1-(9Z)-octadecenoyl-2-hexadecanoyl-sn-glycero-3-phosphate + CoA. It carries out the reaction 1-(9Z-octadecenoyl)-sn-glycero-3-phosphate + octadecanoyl-CoA = 1-(9Z-octadecenoyl)-2-octadecanoyl-sn-glycero-3-phosphate + CoA. The enzyme catalyses 1-(9Z-octadecenoyl)-sn-glycero-3-phosphate + (5Z,8Z,11Z,14Z)-eicosatetraenoyl-CoA = 1-(9Z)-octadecenoyl-2-(5Z,8Z,11Z,14Z)-eicosatetraenoyl-sn-glycero-3-phosphate + CoA. It catalyses the reaction eicosanoyl-CoA + 1-(9Z-octadecenoyl)-sn-glycero-3-phosphate = 1-(9Z)-octadecenoyl-2-eicosanoyl-sn-glycero-3-phosphate + CoA. The catalysed reaction is 1-hexadecanoyl-sn-glycero-3-phosphate + (9Z)-octadecenoyl-CoA = 1-hexadecanoyl-2-(9Z-octadecenoyl)-sn-glycero-3-phosphate + CoA. It carries out the reaction 1-octadecanoyl-sn-glycero-3-phosphate + (9Z)-octadecenoyl-CoA = 1-octadecanoyl-2-(9Z-octadecenoyl)-sn-glycero-3-phosphate + CoA. The enzyme catalyses 1-(5Z,8Z,11Z,14Z-eicosatetraenoyl)-sn-glycero-3-phosphate + (9Z)-octadecenoyl-CoA = 1-(5Z,8Z,11Z,14Z)-eicosatetraenoyl-2-(9Z)-octadecenoyl-sn-glycero-3-phosphate + CoA. Acyltransferase activity is inhibited by detergents such as Triton X-100 and 3-[(3-cholamidopropyl)dimethylammonio]-1-propanesulfonate (CHAPS). Acyltransferase activity is inhibited by the presence of magnesium and calcium. Coenzyme A-dependent lysophosphatidic acid acyltransferase that catalyzes the transfer of an acyl group on a lysophosphatidic acid. Functions preferentially with 1-oleoyl-lysophosphatidic acid followed by 1-palmitoyl-lysophosphatidic acid, 1-stearoyl-lysophosphatidic acid and 1-arachidonoyl-lysophosphatidic acid as lipid acceptor. Functions preferentially with arachidonoyl-CoA followed by oleoyl-CoA as acyl group donors. Functions in phosphatidic acid biosynthesis. May regulate the cellular storage of triacylglycerol through activation of the phospholipase PNPLA2. Involved in keratinocyte differentiation. Regulates lipid droplet fusion. This is 1-acylglycerol-3-phosphate O-acyltransferase ABHD5 from Mus musculus (Mouse).